The primary structure comprises 317 residues: Inositol oxygenase 2 (317 aa).

Substrate is bound by residues Arg57 and 115–117 (DES). The Fe cation site is built by His128, His153, and Asp154. Substrate contacts are provided by residues Lys157 and 174 to 175 (GD). Fe cation contacts are provided by His226, His252, and Asp285. 252-253 (HS) contributes to the substrate binding site.

Belongs to the myo-inositol oxygenase family. Fe cation serves as cofactor. Expressed mainly in roots, stems, flowers and siliques. Low expression in leaves.

Its subcellular location is the cytoplasm. It carries out the reaction myo-inositol + O2 = D-glucuronate + H2O + H(+). Its pathway is polyol metabolism; myo-inositol degradation into D-glucuronate; D-glucuronate from myo-inositol: step 1/1. Involved in the biosynthesis of UDP-glucuronic acid (UDP-GlcA), providing nucleotide sugars for cell-wall polymers. May be also involved in plant ascorbate biosynthesis. This chain is Inositol oxygenase 2 (MIOX2), found in Arabidopsis thaliana (Mouse-ear cress).